A 181-amino-acid polypeptide reads, in one-letter code: Large ribosomal subunit protein uL5c (181 aa).

The protein belongs to the universal ribosomal protein uL5 family. Part of the 50S ribosomal subunit; contacts the 5S rRNA.

It localises to the plastid. Its subcellular location is the chloroplast. In terms of biological role, binds 5S rRNA, forms part of the central protuberance of the 50S subunit. This chain is Large ribosomal subunit protein uL5c (rpl5), found in Pyropia yezoensis (Susabi-nori).